The chain runs to 341 residues: Serine/threonine-protein kinase pdik1l (341 aa).

The Protein kinase domain occupies Y8 to I332. Residue V14–V22 coordinates ATP. The active-site Proton acceptor is the D164.

Belongs to the protein kinase superfamily. Ser/Thr protein kinase family.

The protein localises to the nucleus. It carries out the reaction L-seryl-[protein] + ATP = O-phospho-L-seryl-[protein] + ADP + H(+). The catalysed reaction is L-threonyl-[protein] + ATP = O-phospho-L-threonyl-[protein] + ADP + H(+). This chain is Serine/threonine-protein kinase pdik1l (pdik1l), found in Danio rerio (Zebrafish).